The sequence spans 253 residues: Glutamate racemase (253 aa).

Residues 7-8 and 39-40 each bind substrate; these read DS and YG. Cys-70 functions as the Proton donor/acceptor in the catalytic mechanism. 71–72 is a substrate binding site; sequence NS. Cys-179 functions as the Proton donor/acceptor in the catalytic mechanism. 180–181 provides a ligand contact to substrate; that stretch reads TH.

It belongs to the aspartate/glutamate racemases family.

It carries out the reaction L-glutamate = D-glutamate. It functions in the pathway cell wall biogenesis; peptidoglycan biosynthesis. Provides the (R)-glutamate required for cell wall biosynthesis. This Nitratiruptor sp. (strain SB155-2) protein is Glutamate racemase.